A 518-amino-acid chain; its full sequence is GMP synthase [glutamine-hydrolyzing] (518 aa).

Positions 8 to 201 (TVLIIDFGSQ…VHKISGLKGN (194 aa)) constitute a Glutamine amidotransferase type-1 domain. C85 serves as the catalytic Nucleophile. Catalysis depends on residues H175 and E177. The GMPS ATP-PPase domain maps to 202–393 (WSMASYRDQA…LGLPEQFLGR (192 aa)). 229–235 (SGGVDSS) is a binding site for ATP.

As to quaternary structure, homodimer.

The enzyme catalyses XMP + L-glutamine + ATP + H2O = GMP + L-glutamate + AMP + diphosphate + 2 H(+). Its pathway is purine metabolism; GMP biosynthesis; GMP from XMP (L-Gln route): step 1/1. Its function is as follows. Catalyzes the synthesis of GMP from XMP. In Bartonella quintana (strain Toulouse) (Rochalimaea quintana), this protein is GMP synthase [glutamine-hydrolyzing].